A 334-amino-acid chain; its full sequence is MEIDNQNINNINNNNIHNNINNNNINKRNIENNINNINNINNNISMKNKNNNIDNKKNSNNNNNNNNNNNNKNSISNNNNNNNKSFGLYSLEQPAPLPLWLLVIVFGVSISVIVFLFLNFPSLSPQHKQLIRLPKNFKDVKLLSDILSQYTDDNYFIVITTFGVIYTFLQAFSIPGSVFLSFLSGGLFGLKVGFPLVCFVATLGATFSYLISYYIGRNLVRKLFPDKLKLFSDSLSQKRDNLLNYIVFLRITPFLPNWFINLASPLLDVPIHTFAIGTFIGIMPATFLAVKAGIQIQNIQNPSDIFDLKSILTMAALALLSILPTLIQKKLKVN.

An N-linked (GlcNAc...) asparagine glycan is attached at N43. The interval 47–79 is disordered; the sequence is KNKNNNIDNKKNSNNNNNNNNNNNNKNSISNNN. N-linked (GlcNAc...) asparagine glycosylation is present at N83. Helical transmembrane passes span 97–117, 156–176, 192–214, 246–266, 269–289, and 305–325; these read LPLW…VFLF, FIVI…SIPG, VGFP…ISYY, IVFL…ASPL, VPIH…TFLA, and IFDL…ILPT.

Belongs to the TMEM41 family.

It localises to the membrane. This Dictyostelium discoideum (Social amoeba) protein is Transmembrane protein 41 homolog.